A 592-amino-acid chain; its full sequence is A-type ATP synthase subunit A (592 aa).

234–241 (GGFGTGKT) contributes to the ATP binding site.

It belongs to the ATPase alpha/beta chains family. Has multiple subunits with at least A(3), B(3), C, D, E, F, H, I and proteolipid K(x).

It is found in the cell membrane. The catalysed reaction is ATP + H2O + 4 H(+)(in) = ADP + phosphate + 5 H(+)(out). Its function is as follows. Component of the A-type ATP synthase that produces ATP from ADP in the presence of a proton gradient across the membrane. The A chain is the catalytic subunit. This chain is A-type ATP synthase subunit A, found in Cenarchaeum symbiosum (strain A).